The chain runs to 257 residues: Cobalt transport protein CbiM (257 aa).

Positions Met-1–Ala-33 are cleaved as a signal peptide. The next 6 helical transmembrane spans lie at Gly-39–Trp-59, Ser-74–Pro-94, Leu-117–Gly-137, Leu-138–Leu-158, Ala-171–Leu-191, and Leu-214–Trp-234.

The protein belongs to the CbiM family. Forms an energy-coupling factor (ECF) transporter complex composed of an ATP-binding protein (A component, CbiO), a transmembrane protein (T component, CbiQ) and 2 possible substrate-capture proteins (S components, CbiM and CbiN) of unknown stoichimetry.

It is found in the cell inner membrane. The protein operates within cofactor biosynthesis; adenosylcobalamin biosynthesis. Functionally, part of the energy-coupling factor (ECF) transporter complex CbiMNOQ involved in cobalt import. The protein is Cobalt transport protein CbiM of Thermosynechococcus vestitus (strain NIES-2133 / IAM M-273 / BP-1).